The following is a 376-amino-acid chain: Anhydro-N-acetylmuramic acid kinase (376 aa).

22-29 (GTSMDGAD) contributes to the ATP binding site.

It belongs to the anhydro-N-acetylmuramic acid kinase family.

It carries out the reaction 1,6-anhydro-N-acetyl-beta-muramate + ATP + H2O = N-acetyl-D-muramate 6-phosphate + ADP + H(+). It participates in amino-sugar metabolism; 1,6-anhydro-N-acetylmuramate degradation. Its pathway is cell wall biogenesis; peptidoglycan recycling. Its function is as follows. Catalyzes the specific phosphorylation of 1,6-anhydro-N-acetylmuramic acid (anhMurNAc) with the simultaneous cleavage of the 1,6-anhydro ring, generating MurNAc-6-P. Is required for the utilization of anhMurNAc either imported from the medium or derived from its own cell wall murein, and thus plays a role in cell wall recycling. The polypeptide is Anhydro-N-acetylmuramic acid kinase (Neisseria gonorrhoeae (strain NCCP11945)).